Consider the following 165-residue polypeptide: Cyclic pyranopterin monophosphate synthase (165 aa).

Substrate contacts are provided by residues 83–85 and 120–121; these read FCH and ME. Aspartate 135 is a catalytic residue.

The protein belongs to the MoaC family. In terms of assembly, homohexamer; trimer of dimers.

The enzyme catalyses (8S)-3',8-cyclo-7,8-dihydroguanosine 5'-triphosphate = cyclic pyranopterin phosphate + diphosphate. The protein operates within cofactor biosynthesis; molybdopterin biosynthesis. Functionally, catalyzes the conversion of (8S)-3',8-cyclo-7,8-dihydroguanosine 5'-triphosphate to cyclic pyranopterin monophosphate (cPMP). The protein is Cyclic pyranopterin monophosphate synthase of Xanthomonas campestris pv. campestris (strain B100).